Reading from the N-terminus, the 100-residue chain is Cobalt transport protein CbiN (100 aa).

2 consecutive transmembrane segments (helical) span residues 8–28 and 69–89; these read LSNW…LIFV and LLFS…VGLY.

Belongs to the CbiN family. As to quaternary structure, forms an energy-coupling factor (ECF) transporter complex composed of an ATP-binding protein (A component, CbiO), a transmembrane protein (T component, CbiQ) and 2 possible substrate-capture proteins (S components, CbiM and CbiN) of unknown stoichimetry.

Its subcellular location is the cell inner membrane. It participates in cofactor biosynthesis; adenosylcobalamin biosynthesis. In terms of biological role, part of the energy-coupling factor (ECF) transporter complex CbiMNOQ involved in cobalt import. The chain is Cobalt transport protein CbiN from Nostoc sp. (strain PCC 7120 / SAG 25.82 / UTEX 2576).